A 225-amino-acid polypeptide reads, in one-letter code: Techylectin-like protein (225 aa).

A Fibrinogen C-terminal domain is found at 32-225; sequence CPSPPLPIDC…WTEIKIKDVK (194 aa). Cys-41 and Cys-60 are disulfide-bonded. Residues 75-77 carry the Cell attachment site motif; it reads RGD. The Ca(2+) site is built by Asp-164 and Thr-170. A disulfide bridge links Cys-172 with Cys-185.

As to expression, expressed by the venom gland.

It is found in the secreted. Its function is as follows. Lectin involved in innate immunity. The chain is Techylectin-like protein from Phoneutria nigriventer (Brazilian armed spider).